A 92-amino-acid chain; its full sequence is MARSVWKGPFVDGYLIKKVQKLMESGKSEMIKTWSRRSTILPIFVGFTFSVHNGNKFIPVSVNEEMVGRKLGEFSPTRTFHGHGADKKVKRK.

This sequence belongs to the universal ribosomal protein uS19 family.

In terms of biological role, protein S19 forms a complex with S13 that binds strongly to the 16S ribosomal RNA. This chain is Small ribosomal subunit protein uS19, found in Rickettsia bellii (strain OSU 85-389).